Here is a 325-residue protein sequence, read N- to C-terminus: Phospholipid phosphatase-related protein type 1 (325 aa).

N-linked (GlcNAc...) asparagine glycosylation is present at Asn5. A run of 3 helical transmembrane segments spans residues 13 to 33 (IIPC…LLAY), 67 to 87 (FISP…IIFI), and 127 to 147 (FIGV…AGQV). Asn163 carries N-linked (GlcNAc...) asparagine glycosylation. The next 3 membrane-spanning stretches (helical) occupy residues 201-219 (AALS…TSTI), 226-244 (LAKP…LTGL), and 257-277 (VIAG…CVVH). Ser307 is subject to Phosphoserine. N-linked (GlcNAc...) asparagine glycosylation occurs at Asn316.

This sequence belongs to the PA-phosphatase related phosphoesterase family. In terms of tissue distribution, highly expressed in the brain. Also found in the liver, kidney and testis. In the brain shows a strongest expression in the hippocampus and cerebellum.

It is found in the cell membrane. The protein localises to the cell projection. The protein resides in the neuron projection. Functionally, may play a role in neurite outgrowth and neurogenesis. The protein is Phospholipid phosphatase-related protein type 1 of Rattus norvegicus (Rat).